The sequence spans 180 residues: Probable nicotinate-nucleotide adenylyltransferase (180 aa).

This sequence belongs to the NadD family.

It carries out the reaction nicotinate beta-D-ribonucleotide + ATP + H(+) = deamido-NAD(+) + diphosphate. The protein operates within cofactor biosynthesis; NAD(+) biosynthesis; deamido-NAD(+) from nicotinate D-ribonucleotide: step 1/1. Functionally, catalyzes the reversible adenylation of nicotinate mononucleotide (NaMN) to nicotinic acid adenine dinucleotide (NaAD). This is Probable nicotinate-nucleotide adenylyltransferase from Pelagibacter ubique (strain HTCC1062).